We begin with the raw amino-acid sequence, 166 residues long: Large ribosomal subunit protein uL10 (166 aa).

The protein belongs to the universal ribosomal protein uL10 family. In terms of assembly, part of the ribosomal stalk of the 50S ribosomal subunit. The N-terminus interacts with L11 and the large rRNA to form the base of the stalk. The C-terminus forms an elongated spine to which L12 dimers bind in a sequential fashion forming a multimeric L10(L12)X complex.

Its function is as follows. Forms part of the ribosomal stalk, playing a central role in the interaction of the ribosome with GTP-bound translation factors. The chain is Large ribosomal subunit protein uL10 from Pseudomonas putida (strain GB-1).